Reading from the N-terminus, the 225-residue chain is NAD(P)H-quinone oxidoreductase subunit K, chloroplastic (225 aa).

Residues Cys-43, Cys-44, Cys-108, and Cys-139 each contribute to the [4Fe-4S] cluster site.

It belongs to the complex I 20 kDa subunit family. As to quaternary structure, NDH is composed of at least 16 different subunits, 5 of which are encoded in the nucleus. [4Fe-4S] cluster serves as cofactor.

It localises to the plastid. The protein localises to the chloroplast thylakoid membrane. It carries out the reaction a plastoquinone + NADH + (n+1) H(+)(in) = a plastoquinol + NAD(+) + n H(+)(out). The enzyme catalyses a plastoquinone + NADPH + (n+1) H(+)(in) = a plastoquinol + NADP(+) + n H(+)(out). Its function is as follows. NDH shuttles electrons from NAD(P)H:plastoquinone, via FMN and iron-sulfur (Fe-S) centers, to quinones in the photosynthetic chain and possibly in a chloroplast respiratory chain. The immediate electron acceptor for the enzyme in this species is believed to be plastoquinone. Couples the redox reaction to proton translocation, and thus conserves the redox energy in a proton gradient. The protein is NAD(P)H-quinone oxidoreductase subunit K, chloroplastic of Carica papaya (Papaya).